The chain runs to 351 residues: UDP-3-O-acylglucosamine N-acyltransferase (351 aa).

Histidine 240 (proton acceptor) is an active-site residue.

This sequence belongs to the transferase hexapeptide repeat family. LpxD subfamily. Homotrimer.

The catalysed reaction is a UDP-3-O-[(3R)-3-hydroxyacyl]-alpha-D-glucosamine + a (3R)-hydroxyacyl-[ACP] = a UDP-2-N,3-O-bis[(3R)-3-hydroxyacyl]-alpha-D-glucosamine + holo-[ACP] + H(+). It participates in bacterial outer membrane biogenesis; LPS lipid A biosynthesis. Functionally, catalyzes the N-acylation of UDP-3-O-acylglucosamine using 3-hydroxyacyl-ACP as the acyl donor. Is involved in the biosynthesis of lipid A, a phosphorylated glycolipid that anchors the lipopolysaccharide to the outer membrane of the cell. The chain is UDP-3-O-acylglucosamine N-acyltransferase from Methylacidiphilum infernorum (isolate V4) (Methylokorus infernorum (strain V4)).